We begin with the raw amino-acid sequence, 180 residues long: ADP-ribosylation factor-like protein 1 (180 aa).

Gly-2 carries the N-myristoyl glycine lipid modification. GTP-binding positions include 23 to 30 (GLDGAGKT), 66 to 70 (DLGGQ), and 125 to 128 (NKQD).

The protein belongs to the small GTPase superfamily. Arf family. In terms of tissue distribution, expressed in neuronal cells. Expression in hypodermal tissues is absent.

The protein resides in the golgi apparatus. It is found in the cytoplasm. Its subcellular location is the cytoplasmic granule. Its function is as follows. GTP-binding protein that may be involved in protein trafficking; may modulate vesicle budding and uncoating within the Golgi apparatus. Plays a role in male tail tip morphogenesis. In Caenorhabditis elegans, this protein is ADP-ribosylation factor-like protein 1.